We begin with the raw amino-acid sequence, 312 residues long: Protein Rep40 (312 aa).

Positions 84-239 (DPQYAASVFL…LDHDFGKVTK (156 aa)) constitute an SF3 helicase domain. 110 to 117 (GPATTGKT) serves as a coordination point for ATP. A disordered region spans residues 264–301 (KGGAKKRPAPSDADISEPKRVRESVAQPSTSDAEASIN).

Homooligomer.

It is found in the host nucleus. The catalysed reaction is ATP + H2O = ADP + phosphate + H(+). In terms of biological role, plays a critical role during packaging of viral DNA into empty capsids, where they are thought to be part of the packaging motor complex. The single stranded genomic DNA is packaged in a 3' to 5' direction and requires the association of viral DNA with Rep40. This chain is Protein Rep40 (Rep40), found in Mammalia (AAV-2).